Reading from the N-terminus, the 403-residue chain is Glucose/galactose-binding lipoprotein (403 aa).

Residues 1-25 (MKENSCTACSRRLALFVGAAVLVVG) form the signal peptide. A lipid anchor (N-palmitoyl cysteine) is attached at Cys26. Residue Cys26 is the site of S-diacylglycerol cysteine attachment.

Belongs to the bacterial solute-binding protein 2 family.

It localises to the cell membrane. In terms of biological role, may be involved in the transport of sugars. May have a role in chemotaxis. The sequence is that of Glucose/galactose-binding lipoprotein (mglB) from Treponema pallidum (strain Nichols).